The chain runs to 400 residues: Probable transposase for insertion sequence element ISRM3-like (400 aa).

The protein belongs to the transposase mutator family.

Functionally, required for the transposition of the insertion element. The sequence is that of Probable transposase for insertion sequence element ISRM3-like from Sinorhizobium fredii (strain NBRC 101917 / NGR234).